The sequence spans 498 residues: Neoxanthin synthase, chloroplastic (498 aa).

The transit peptide at 1–33 (METLLKPLTSLLLSSPTPHRSIFQQNPPSLNPT) directs the protein to the chloroplast. The disordered stretch occupies residues 16–38 (PTPHRSIFQQNPPSLNPTTKKKS). Over residues 22–33 (IFQQNPPSLNPT) the composition is skewed to polar residues. 84–112 (VIIIGAGPAGLRLAEHVSKYGIKVCCVDP) is an NAD(+) binding site.

This sequence belongs to the lycopene cyclase family.

Its subcellular location is the plastid. It is found in the chloroplast. It carries out the reaction all-trans-violaxanthin = all-trans-neoxanthin. It participates in carotenoid biosynthesis; neoxanthin biosynthesis. Functionally, involved in the synthesis of neoxanthin, the last product of carotenoid synthesis and a precursor of abscisic acid. The polypeptide is Neoxanthin synthase, chloroplastic (NXS) (Solanum tuberosum (Potato)).